The primary structure comprises 151 residues: Small ribosomal subunit protein uS15 (151 aa).

Residues 1-20 (MARLHSGKRGSSGSTKPLRT) form a disordered region.

This sequence belongs to the universal ribosomal protein uS15 family. As to quaternary structure, part of the 30S ribosomal subunit.

The chain is Small ribosomal subunit protein uS15 from Methanococcus vannielii (strain ATCC 35089 / DSM 1224 / JCM 13029 / OCM 148 / SB).